The following is a 228-amino-acid chain: Response regulator MprA (228 aa).

A Response regulatory domain is found at R2–L116. The residue at position 46 (D46) is a 4-aspartylphosphate. Residues S127–E225 constitute a DNA-binding region (ompR/PhoB-type).

Phosphorylated and dephosphorylated by MprB.

Its subcellular location is the cytoplasm. Its function is as follows. Member of the two-component regulatory system MprB/MprA which contributes to maintaining a balance among several systems involved in stress resistance and is required for establishment and maintenance of persistent infection in the host. Functions as a transcriptional regulator that recognizes a 19-bp nucleotide motif comprizing two loosely conserved 8-bp direct DNA-binding motif repeats separated by a 3-bp spacer region. The chain is Response regulator MprA (mprA) from Mycobacterium leprae (strain TN).